The following is a 339-amino-acid chain: Heat stress transcription factor C-1a (339 aa).

The stretch at 154-217 (EEEDAAEDVL…LAKLADDPNA (64 aa)) forms a coiled coil. A hydrophobic repeat HR-A/B region spans residues 176-212 (LRHEQTAIGEELARMSQRLQATERRPDQLMSFLAKLA). Positions 227–248 (AERKRRRQHLPSHEPTVCPLPP) are disordered. Positions 229–233 (RKRRR) match the Nuclear localization signal motif.

The protein belongs to the HSF family. Class C subfamily. In terms of assembly, homotrimer. In terms of processing, exhibits temperature-dependent phosphorylation.

Its subcellular location is the nucleus. In terms of biological role, transcriptional regulator that specifically binds DNA of heat shock promoter elements (HSE). The chain is Heat stress transcription factor C-1a (HSFC1A) from Oryza sativa subsp. japonica (Rice).